Here is a 350-residue protein sequence, read N- to C-terminus: Transmembrane protein 185A (350 aa).

A run of 7 helical transmembrane segments spans residues 16–36 (LIYACLLLFSVLLALRLDGII), 41–61 (WAVFAPIWLWKLMVIVGASVG), 81–101 (FKAMLIAVGIHLLLLMFEVLV), 111–131 (FWLLVFMPLFFVSPVSVAACV), 177–197 (ILMSFLCLVVLYYIVWSVLFL), 211–231 (ITMALSWMTIVVPLLTFEILL), and 240–260 (AFSCIPIFVPLWLSLITLMAT). Positions 298–350 (DLHHEDSEETEETPVPEPPKIAPMFRKKARVVITQSPGKYVLPPPKLNIEMPD) are mediates interaction with MAP1B.

It belongs to the TMEM185 family. As to quaternary structure, interacts with MAP1B. In terms of tissue distribution, broadly expressed in brain where it is specifically expressed by neurons (at protein level). Also detected in some cells of arterioles, intestine, lung and testis (at protein level).

The protein resides in the cell projection. It localises to the dendrite. It is found in the membrane. The chain is Transmembrane protein 185A (Tmem185a) from Mus musculus (Mouse).